The chain runs to 546 residues: Nicotinic acid-CoA ligase olcI (546 aa).

194–205 provides a ligand contact to AMP; the sequence is MFSTSGTSGLPK. An AMP-binding region spans residues 445–523; the sequence is EIEAVLLKDP…ESLPRTGIGK (79 aa).

Belongs to the ATP-dependent AMP-binding enzyme family.

It carries out the reaction nicotinate + ATP + CoA = nicotinyl-CoA + AMP + diphosphate. It participates in secondary metabolite biosynthesis; terpenoid biosynthesis. In terms of biological role, nicotinic acid-CoA ligase; part of the gene cluster that mediates the biosynthesis of 15-deoxyoxalicine B. The first step of the pathway is the synthesis of nicotinyl-CoA from nicotinic acid by the nicotinic acid-CoA ligase olcI. Nicotinyl-CoA is then a substrate of polyketide synthase olcA to produce 4-hydroxy-6-(3-pyridinyl)-2H-pyran-2-one (HPPO) which is further prenylated by the polyprenyl transferase olcH to yield geranylgeranyl-HPPO. Geranylgeranyl pyrophosphate is provided by the cluster-specific geranylgeranyl pyrophosphate synthase olcC. The FAD-dependent monooxygenase olcE catalyzes the epoxidation of geranylgeranyl-HPPO and the terpene cyclase olcD catalyzes the cyclization of the terpenoid component, resulting in the formation of the tricyclic terpene moiety seen in predecaturin E. The cytochrome P450 monooxygenase then catalyzes the allylic oxidation of predecaturin E, which is followed by spirocylization with concomitant loss of one molecule of water to form decaturin E. Decaturin E is the substrate of the cytochrome P450 monooxygenase olcJ which hydroxylates it at the C-29 position to form decaturin F. The short-chain dehydrogenase/reductase olcF may catalyze the oxidation of decaturin F to generate the 29-hydroxyl-27-one intermediate, and subsequent hemiacetal formation probably leads to the formation of decaturin C. The dioxygenase olcK may be a peroxisomal enzyme that catalyzes the hydroxylation of decaturin C into decaturin A once decaturin C is shuttled into the peroxisome by the MFS transporter olcL. Finally the cytochrome P450 monooxygenase olcB catalyzes the oxidative rearrangement to yield 15-deoxyoxalicine B. In the absence of olcJ, decaturin E may be shunted to a pathway in which it is oxidized to a ketone, possibly by olcF, to form decaturin D, which undergoes further allylic oxidation to yield decaturin G. Moreover, in the absence of oclK or oclL, oclB can convert decaturin C into 15-deoxyoxalicine A. This Penicillium canescens protein is Nicotinic acid-CoA ligase olcI.